We begin with the raw amino-acid sequence, 1002 residues long: DNA-directed RNA polymerase 1B, mitochondrial (1002 aa).

A mitochondrion-targeting transit peptide spans 1-21; sequence MWRYISKHAYSRKFRNSHDSA. Catalysis depends on residues D703, K778, and D935.

Belongs to the phage and mitochondrial RNA polymerase family.

The protein localises to the mitochondrion. The catalysed reaction is RNA(n) + a ribonucleoside 5'-triphosphate = RNA(n+1) + diphosphate. In terms of biological role, DNA-dependent RNA polymerase catalyzes the transcription of DNA into RNA using the four ribonucleoside triphosphates as substrates. This chain is DNA-directed RNA polymerase 1B, mitochondrial (RPOT1-TOM), found in Nicotiana tabacum (Common tobacco).